Here is an 815-residue protein sequence, read N- to C-terminus: Phenylalanine--tRNA ligase beta subunit (815 aa).

The 110-residue stretch at 39-148 (SKELQKFEVA…KDAVVGDNFT (110 aa)) folds into the tRNA-binding domain. Positions 421–496 (PQKKPLDFSV…RIYGYDKIES (76 aa)) constitute a B5 domain. Positions 474, 480, 483, and 484 each coordinate Mg(2+). Residues 721-814 (SDYQANFRDY…ISQKFQGILR (94 aa)) enclose the FDX-ACB domain.

This sequence belongs to the phenylalanyl-tRNA synthetase beta subunit family. Type 1 subfamily. As to quaternary structure, tetramer of two alpha and two beta subunits. It depends on Mg(2+) as a cofactor.

The protein resides in the cytoplasm. The enzyme catalyses tRNA(Phe) + L-phenylalanine + ATP = L-phenylalanyl-tRNA(Phe) + AMP + diphosphate + H(+). This Rickettsia prowazekii (strain Madrid E) protein is Phenylalanine--tRNA ligase beta subunit (pheT).